A 118-amino-acid chain; its full sequence is MVHLTKTLRFINNPGFRKFYYGLQGYNKYGLYYDDFYDYTDAAHLEAVRRLPPDLYDQHTYRLVRASQLEITKQFLPKEQWPSYEEDMDKGRFLTPYLDEVMKEKKEKEEWINFLSKD.

The tract at residues Met1–Tyr32 is igE-binding. Immunodominant epitope; induces specific IgE antibody production in mice. Causes degranulation of rat basophilic leukemia (RBL) cells and the release of beta-hexosaminidase from them.

This sequence belongs to the UQCRB/QCR7 family. In terms of assembly, component of the ubiquinol-cytochrome c oxidoreductase (cytochrome b-c1 complex, complex III, CIII), a multisubunit enzyme composed of 3 respiratory subunits cytochrome b, cytochrome c1 and Rieske protein, 2 core protein subunits, and additional low-molecular weight protein subunits. The complex exists as an obligatory dimer and forms supercomplexes (SCs) in the inner mitochondrial membrane with cytochrome c oxidase (complex IV, CIV).

It localises to the mitochondrion inner membrane. In terms of biological role, component of the ubiquinol-cytochrome c oxidoreductase, a multisubunit transmembrane complex that is part of the mitochondrial electron transport chain which drives oxidative phosphorylation. The respiratory chain contains 3 multisubunit complexes succinate dehydrogenase (complex II, CII), ubiquinol-cytochrome c oxidoreductase (cytochrome b-c1 complex, complex III, CIII) and cytochrome c oxidase (complex IV, CIV), that cooperate to transfer electrons derived from NADH and succinate to molecular oxygen, creating an electrochemical gradient over the inner membrane that drives transmembrane transport and the ATP synthase. The cytochrome b-c1 complex catalyzes electron transfer from ubiquinol to cytochrome c, linking this redox reaction to translocation of protons across the mitochondrial inner membrane, with protons being carried across the membrane as hydrogens on the quinol. In the process called Q cycle, 2 protons are consumed from the matrix, 4 protons are released into the intermembrane space and 2 electrons are passed to cytochrome c. The chain is Cytochrome b-c1 complex subunit 7 from Dermatophagoides farinae (American house dust mite).